Reading from the N-terminus, the 769-residue chain is Homoaconitase, mitochondrial (769 aa).

The transit peptide at 1–28 (MQSRLLPSGPGRRWISLRVPNTPQRRAF) directs the protein to the mitochondrion. Residues C391, C460, and C463 each coordinate [4Fe-4S] cluster.

Belongs to the aconitase/IPM isomerase family. It depends on [4Fe-4S] cluster as a cofactor.

The protein resides in the mitochondrion. The enzyme catalyses (2R,3S)-homoisocitrate = cis-homoaconitate + H2O. It functions in the pathway amino-acid biosynthesis; L-lysine biosynthesis via AAA pathway; L-alpha-aminoadipate from 2-oxoglutarate: step 3/5. Catalyzes the reversible hydration of cis-homoaconitate to (2R,3S)-homoisocitrate, a step in the alpha-aminoadipate pathway for lysine biosynthesis. The polypeptide is Homoaconitase, mitochondrial (lysA) (Aspergillus niger (strain ATCC MYA-4892 / CBS 513.88 / FGSC A1513)).